A 655-amino-acid polypeptide reads, in one-letter code: MRPSQTELWLGLTLTLALLAVRWASAQAPIYVSSWAVRVTKGYQEAERLARKFGFVNLGQIFPDDQYFHLRHRGVAQQSLTPHWGHRLRLKKDPKVRWFEQQTLRRRVKRSLVVPTDPWFSKQWYMNKEIQQDLNILKAWNQGLTGRGVVISILDDGIEKDHPDLWANYDPLASYDFNDYDPDPQPRYTPNDENRHGTRCAGEVSATANNGFCGAGVAFNARIGGVRMLDGAITDIVEAQSLSLQPQHIHIYSASWGPEDDGRTVDGPGLLTQEAFRRGVTKGRQGLGTLFIWASGNGGLHYDNCNCDGYTNSIHTLSVGSTTRQGRVPWYSEACASTFTTTFSSGVVTDPQIVTTDLHHQCTDKHTGTSASAPLAAGMIALALEANPLLTWRDLQHLVVRASRPAQLQAEDWRINGVGRQVSHHYGYGLLDAGLLVDLARVWLPTKPQKKCAIRVVHTPTPILPRMLVPKNVTACSDGSRRRLIRSLEHVQVQLSLSYSRRGDLEIFLTSPMGTRSTLVAIRPLDISGQGYNNWIFMSTHYWDEDPQGLWTLGLENKGYYFNTGTLYYYTLLLYGTAEDMTARPQAPQVTSRARACVQRDTEGLCQESHSPLSILAGLCLISSQQWWWLYSHPQQPVTEGQASCHPPVTPAAAA.

Residues 1–26 form the signal peptide; it reads MRPSQTELWLGLTLTLALLAVRWASA. The propeptide occupies 27–110; that stretch reads QAPIYVSSWA…QQTLRRRVKR (84 aa). Residues 123–437 form the Peptidase S8 domain; that stretch reads QWYMNKEIQQ…YGLLDAGLLV (315 aa). Catalysis depends on charge relay system residues D155, H196, and S370. A P/Homo B domain is found at 446–580; it reads TKPQKKCAIR…TLLLYGTAED (135 aa). The N-linked (GlcNAc...) asparagine glycan is linked to N472.

The protein belongs to the peptidase S8 family. Furin subfamily. The proPCSK4 form interacts with HSPA5; the interaction takes place at the endoplasmic reticulum. N-glycosylated. Post-translationally, synthesized in the endoplasmic reticulum as a zymogen, is matured by autocatalytic cleavage between the prodomain and the catalytic domain. In terms of tissue distribution, expressed abundantly in the testis since postnatal Day 16. In testis, strongly detected in round and elongated spermatids as well as spermatocytes. Also observed in residual bodies engulfed by Sertoli cells at spermatogenic stages VIII and IX. In ovaries, expressed in macrophage-like cells of the ovarian theca, interstitium and corpora lutea.

It is found in the cytoplasmic vesicle. Its subcellular location is the secretory vesicle. The protein localises to the acrosome membrane. Its function is as follows. Proprotein convertase involved in the processing of hormone and other protein precursors at sites comprised of pairs of basic amino acid residues. In males, important for ADAM2 processing as well as other acrosomal proteins with roles in fertilization and critical for normal fertilization events such as sperm capacitation, acrosome reaction and binding of sperm to zona pellucida. Also plays a role in female fertility, involved in the regulation of trophoblast migration and placental development, may be through the proteolytical processing and activation of proteins such as IGF2. May also participate in folliculogenesis in the ovaries. The sequence is that of Proprotein convertase subtilisin/kexin type 4 (Pcsk4) from Mus musculus (Mouse).